The chain runs to 260 residues: Transmembrane protein 106C (260 aa).

A lipid anchor (N-myristoyl glycine) is attached at Gly-2. The chain crosses the membrane as a helical span at residues 85–105 (YVLLSVLLCLLASGLVFFFLF). Asn-184 carries N-linked (GlcNAc...) asparagine glycosylation. A helical transmembrane segment spans residues 196–216 (SYVYFYCTLPAIRVHNIVIFM).

Belongs to the TMEM106 family. In terms of assembly, interacts with TMEM106B.

The protein resides in the endoplasmic reticulum membrane. Its subcellular location is the membrane. The protein is Transmembrane protein 106C (Tmem106c) of Mus musculus (Mouse).